The sequence spans 154 residues: MSGSMFSVFSLLYLLSVCSACYISNCPIGGKRAIQDSPSRQCMSCGPGDRGRCFGPSICCGEGLGCLLGSPETQRCLEEDFLPSPCEAGGKVCGYEGRCAAPGVCCDSEGCSVDQSCVDGDGDATAVSQPASSQDLLLKLLHLSNPAHPYRLHQ.

The N-terminal stretch at 1–20 (MSGSMFSVFSLLYLLSVCSA) is a signal peptide. Residues Cys-21 and Cys-26 are joined by a disulfide bond. Glycine amide is present on Gly-29. 7 cysteine pairs are disulfide-bonded: Cys-42/Cys-86, Cys-45/Cys-59, Cys-53/Cys-76, Cys-60/Cys-66, Cys-93/Cys-105, Cys-99/Cys-117, and Cys-106/Cys-111.

The protein belongs to the vasopressin/oxytocin family.

In terms of biological role, isotocin causes contraction of smooth muscles. The protein is Isotocin-neurophysin IT 1 of Catostomus commersonii (White sucker).